The chain runs to 214 residues: Redox-sensing transcriptional repressor Rex (214 aa).

The segment at residues 17-56 (KYHRYLEELLKSDVDRISSKELSEKIGFTASQIRQDLNCF) is a DNA-binding region (H-T-H motif). Residue 91–96 (GAGNIG) participates in NAD(+) binding.

The protein belongs to the transcriptional regulatory Rex family. As to quaternary structure, homodimer.

Its subcellular location is the cytoplasm. Modulates transcription in response to changes in cellular NADH/NAD(+) redox state. This is Redox-sensing transcriptional repressor Rex from Clostridium acetobutylicum (strain ATCC 824 / DSM 792 / JCM 1419 / IAM 19013 / LMG 5710 / NBRC 13948 / NRRL B-527 / VKM B-1787 / 2291 / W).